A 1358-amino-acid chain; its full sequence is Protein STU1 (1358 aa).

Disordered stretches follow at residues 915 to 950 and 970 to 990; these read FVAD…SHGF and QPET…DESN. Residues 926 to 949 are compositionally biased toward basic and acidic residues; sequence DDTKKNGSDVVDHEEIRDHEESHG. The segment covering 973 to 990 has biased composition (acidic residues); that stretch reads TVDENVDPMEVDSPDESN.

This sequence belongs to the CLASP family. As to quaternary structure, interacts with microtubules.

It localises to the cytoplasm. It is found in the cytoskeleton. The protein localises to the nucleus. The protein resides in the spindle. In terms of biological role, microtubule binding protein that promotes the stabilization of dynamic microtubules. Required for mitotic spindle formation. The chain is Protein STU1 (STU1) from Kluyveromyces lactis (strain ATCC 8585 / CBS 2359 / DSM 70799 / NBRC 1267 / NRRL Y-1140 / WM37) (Yeast).